The following is a 315-amino-acid chain: Cysteine proteinase 2 (315 aa).

An N-terminal signal peptide occupies residues 1–13 (MFAFICLLAIASA). Positions 14-93 (IDFNTWASKN…NGQVKYLNIQ (80 aa)) are cleaved as a propeptide — activation peptide. Intrachain disulfides connect Cys-115–Cys-161 and Cys-152–Cys-193. Residue Cys-118 is part of the active site. Active-site residues include His-259 and Asn-279.

It belongs to the peptidase C1 family. As to quaternary structure, interacts with cysteine protease inhibitor ICP1. Interacts with cysteine protease inhibitor ICP2.

The protein localises to the cell membrane. It is found in the cytoplasmic vesicle. It localises to the phagosome. The protein resides in the secreted. It catalyses the reaction Hydrolysis of proteins, including basement membrane collagen and azocasein. Preferential cleavage: Arg-Arg-|-Xaa in small molecule substrates including Z-Arg-Arg-|-NHMec.. With respect to regulation, inhibited by cysteine protease inhibitors ICP1 and ICP2. Inhibited by leupeptin and such inhibitors of cysteine proteinases as L-transepoxysuccinyl-L-leucylamido-(4-guanidino)butane, peptidyldiazomethanes, iodoacetic acid and chicken cystatin. Cysteine protease which degrades matrix proteins such as collagen, laminin and fibronectin and thus is involved in the destruction of human tissue. Can abolish adhesion. May play an important role in pathogenicity. The chain is Cysteine proteinase 2 from Entamoeba histolytica (strain ATCC 30459 / HM-1:IMSS / ABRM).